Reading from the N-terminus, the 147-residue chain is uncharacterized protein (147 aa).

This is an uncharacterized protein from Caenorhabditis elegans.